The sequence spans 907 residues: Gamma-tubulin complex component 3 (907 aa).

N-acetylalanine is present on A2. At S113 the chain carries Phosphoserine. Residues 210–230 (NQPSSQATTSKGVPSAVSRNM) show a composition bias toward polar residues. Residues 210–241 (NQPSSQATTSKGVPSAVSRNMTRSRREGDTGG) are disordered.

Belongs to the TUBGCP family. As to quaternary structure, component of the gamma-tubulin ring complex (gTuRC) consisting of TUBGCP2, TUBGCP3, TUBGCP4, TUBGCP5 and TUBGCP6 and gamma-tubulin TUBG1 or TUBG2. TUBGCP2, TUBGCP3, TUBGCP4, TUBGCP5 and TUBGCP6 assemble in a 5:5:2:1:1 stoichiometry; each is associated with a gamma-tubulin, thereby arranging 14 gamma-tubulins in a helical manner. Gamma-tubulin at the first position is blocked by TUBGCP3 at the last position, allowing 13 protafilaments to grow into a microtubule. The gTuRC (via TUBGCP3 and TUBGCP6) interacts with ACTB and MZT1; the interactions form a luminal bridge that stabilizes the initial structure during complex assembly. The gTuRC (via TUBGCP2) interacts with MZT2A/MZT2B and CDK5RAP2 (via CM1 motif); the interactions play a role in gTuRC activation. Interacts with NIN (via N-terminus); the interaction may promote recruitment of the gamma-tubulin ring complex to the centrosome. Ubiquitously expressed.

The protein resides in the cytoplasm. The protein localises to the cytoskeleton. It is found in the microtubule organizing center. It localises to the centrosome. Component of the gamma-tubulin ring complex (gTuRC) which mediates microtubule nucleation. The gTuRC regulates the minus-end nucleation of alpha-beta tubulin heterodimers that grow into microtubule protafilaments, a critical step in centrosome duplication and spindle formation. This is Gamma-tubulin complex component 3 (TUBGCP3) from Homo sapiens (Human).